We begin with the raw amino-acid sequence, 475 residues long: Vitronectin (475 aa).

The N-terminal stretch at 1–19 (MAPLRPIFTLALLLWVVLA) is a signal peptide. Positions 20–63 (DQESCKDRCTEGFNANRKCQCDELCSYYQSCCADYAAECKPQVT) constitute an SMB domain. Disulfide bonds link Cys24–Cys28, Cys24–Cys40, Cys28–Cys58, Cys38–Cys40, Cys38–Cys51, Cys44–Cys50, and Cys51–Cys58. The Cell attachment site signature appears at 64-66 (RGD). Thr69 carries the post-translational modification Phosphothreonine. 3 positions are modified to sulfotyrosine: Tyr75, Tyr78, and Tyr80. Asn87 carries an N-linked (GlcNAc...) asparagine glycan. The tract at residues 87–123 (NASVHAQPESPTVGQEPTLSPDLQTEGGAEPTHEVPL) is disordered. A compositionally biased stretch (polar residues) spans 95–109 (ESPTVGQEPTLSPDL). 3 Hemopexin repeats span residues 158–202 (GKPF…VWGI), 203–250 (EGPI…FSGI), and 251–305 (PDNV…FEHF). N-linked (GlcNAc...) asparagine glycosylation is found at Asn169 and Asn242. Residues Tyr279 and Tyr282 each carry the sulfotyrosine modification. Ser312 carries the phosphoserine modification. Positions 359 to 391 (LTPSPSAKKQKSRRRSRKRYRSRYGRGRSQNSR) are disordered. Residues 366–384 (KKQKSRRRSRKRYRSRYGR) show a composition bias toward basic residues. The glycosaminoglycan binding region stretch occupies residues 366–392 (KKQKSRRRSRKRYRSRYGRGRSQNSRR). Ser394 bears the Phosphoserine mark. The Hemopexin 4 repeat unit spans residues 419–469 (TSWLKPATSEPIQSVYFFSGDKYYRVNLRTQRVDTVNPPYPRSIAQYWLGC).

Interacts with SERPINE1/PAI1 and C1QBP. Monomer. In terms of processing, sulfated on tyrosine residues. N- and O-glycosylated. Post-translationally, it has been suggested that the active SMB domain may be permitted considerable disulfide bond heterogeneity or variability, thus two alternate disulfide patterns based on 3D structures are described with 1 disulfide bond conserved in both. In terms of tissue distribution, plasma.

The protein localises to the secreted. It is found in the extracellular space. In terms of biological role, vitronectin is a cell adhesion and spreading factor found in serum and tissues. Vitronectin interact with glycosaminoglycans and proteoglycans. Is recognized by certain members of the integrin family and serves as a cell-to-substrate adhesion molecule. Inhibitor of the membrane-damaging effect of the terminal cytolytic complement pathway. In Oryctolagus cuniculus (Rabbit), this protein is Vitronectin (VTN).